Consider the following 397-residue polypeptide: L-asparaginase-like protein GM15681 (397 aa).

Residues 1–22 (MLAQSCCLRLLILLLLFTSICS) form the signal peptide. Cystine bridges form between Cys-90–Cys-95, Cys-189–Cys-205, and Cys-344–Cys-371.

This sequence belongs to the Ntn-hydrolase family.

The polypeptide is L-asparaginase-like protein GM15681 (Drosophila sechellia (Fruit fly)).